The chain runs to 225 residues: 3-dehydroquinate dehydratase (225 aa).

Residues Ser-6, 30–32, and Arg-62 contribute to the 3-dehydroquinate site; that span reads EWR. His-118 functions as the Proton donor/acceptor in the catalytic mechanism. Lys-143 acts as the Schiff-base intermediate with substrate in catalysis. 3 residues coordinate 3-dehydroquinate: Arg-186, Ser-205, and Gln-209.

The protein belongs to the type-I 3-dehydroquinase family. In terms of assembly, homodimer.

It catalyses the reaction 3-dehydroquinate = 3-dehydroshikimate + H2O. It participates in metabolic intermediate biosynthesis; chorismate biosynthesis; chorismate from D-erythrose 4-phosphate and phosphoenolpyruvate: step 3/7. In terms of biological role, involved in the third step of the chorismate pathway, which leads to the biosynthesis of aromatic amino acids. Catalyzes the cis-dehydration of 3-dehydroquinate (DHQ) and introduces the first double bond of the aromatic ring to yield 3-dehydroshikimate. The sequence is that of 3-dehydroquinate dehydratase from Streptococcus sanguinis (strain SK36).